Here is a 301-residue protein sequence, read N- to C-terminus: Probable aspartoacylase (301 aa).

Positions 13 and 16 each coordinate Zn(2+). Substrate-binding positions include Arg54 and 61 to 62 (NR). His105 is a Zn(2+) binding site. Residues Glu163 and Tyr273 each coordinate substrate.

It belongs to the AspA/AstE family. Aspartoacylase subfamily. Requires Zn(2+) as cofactor.

The enzyme catalyses an N-acyl-L-aspartate + H2O = a carboxylate + L-aspartate. The polypeptide is Probable aspartoacylase (Prochlorococcus marinus (strain MIT 9215)).